A 368-amino-acid polypeptide reads, in one-letter code: Carbamoyl phosphate synthase small chain (368 aa).

The segment at 1 to 178 is CPSase; the sequence is MKAVLGLEDG…GAAGAWKGSG (178 aa). L-glutamine is bound by residues Ser45, Gly230, and Gly232. One can recognise a Glutamine amidotransferase type-1 domain in the interval 182 to 368; it reads HAVVVDLGIK…KVVKVLGGGL (187 aa). Cys257 acts as the Nucleophile in catalysis. Residues Phe258, Gln261, Asn299, Gly301, and Tyr302 each contribute to the L-glutamine site. Catalysis depends on residues His342 and Glu344.

The protein belongs to the CarA family. As to quaternary structure, composed of two chains; the small (or glutamine) chain promotes the hydrolysis of glutamine to ammonia, which is used by the large (or ammonia) chain to synthesize carbamoyl phosphate. Tetramer of heterodimers (alpha,beta)4.

It carries out the reaction hydrogencarbonate + L-glutamine + 2 ATP + H2O = carbamoyl phosphate + L-glutamate + 2 ADP + phosphate + 2 H(+). It catalyses the reaction L-glutamine + H2O = L-glutamate + NH4(+). It participates in amino-acid biosynthesis; L-arginine biosynthesis; carbamoyl phosphate from bicarbonate: step 1/1. Its pathway is pyrimidine metabolism; UMP biosynthesis via de novo pathway; (S)-dihydroorotate from bicarbonate: step 1/3. In terms of biological role, small subunit of the glutamine-dependent carbamoyl phosphate synthetase (CPSase). CPSase catalyzes the formation of carbamoyl phosphate from the ammonia moiety of glutamine, carbonate, and phosphate donated by ATP, constituting the first step of 2 biosynthetic pathways, one leading to arginine and/or urea and the other to pyrimidine nucleotides. The small subunit (glutamine amidotransferase) binds and cleaves glutamine to supply the large subunit with the substrate ammonia. The sequence is that of Carbamoyl phosphate synthase small chain from Methanosarcina mazei (strain ATCC BAA-159 / DSM 3647 / Goe1 / Go1 / JCM 11833 / OCM 88) (Methanosarcina frisia).